The following is a 583-amino-acid chain: R-linalool synthase QH5, chloroplastic (583 aa).

Residues 1–40 (MASISLFPYSILKQTSPLARGTAYNRIYSTKTTGITVDVA) constitute a chloroplast transit peptide. (2E)-geranyl diphosphate is bound by residues Arg298, Asp335, Asp339, Arg476, and Asp479. 2 residues coordinate Mg(2+): Asp335 and Asp339. Residues 335-339 (DDVYD) carry the DDXXD motif motif. Mg(2+) contacts are provided by Asp479, Thr483, and Glu487. Asp492 is a binding site for K(+).

It belongs to the terpene synthase family. Tpsb subfamily. Mg(2+) is required as a cofactor. Requires Mn(2+) as cofactor. The cofactor is K(+). In terms of tissue distribution, expressed in every aerial organ except for the stem stele of mature plants. Not detected in roots.

The protein localises to the plastid. It is found in the chloroplast. It catalyses the reaction (2E)-geranyl diphosphate + H2O = (R)-linalool + diphosphate. It functions in the pathway secondary metabolite biosynthesis; terpenoid biosynthesis. Monoterpene synthase that catalyzes the formation of (3R)-linalool from geranyl diphosphate, but not from isopentenyl diphosphate, dimethylallyl diphosphate, chrysanthemyl diphosphate, farnesyl diphosphate, (+)-copalyl diphosphate or geranylgeranyl diphosphate. This is R-linalool synthase QH5, chloroplastic from Artemisia annua (Sweet wormwood).